We begin with the raw amino-acid sequence, 135 residues long: MPTINQLIRKERKKVVKKTKSPALVECPQRRGVCTRVYTTTPKKPNSALRKVAKVRLTSKFEVISYIPGEGHNLQEHSIVLVRGGRVKDLPGVKYHIVRGALDTAGVNKRTVSRSKYGTKKAKATDKKATDSKKK.

A 3-methylthioaspartic acid modification is found at Asp89. The interval 108–135 (NKRTVSRSKYGTKKAKATDKKATDSKKK) is disordered. Residues 111–122 (TVSRSKYGTKKA) show a composition bias toward basic residues. Residues 123–135 (KATDKKATDSKKK) show a composition bias toward basic and acidic residues.

The protein belongs to the universal ribosomal protein uS12 family. In terms of assembly, part of the 30S ribosomal subunit. Contacts proteins S8 and S17. May interact with IF1 in the 30S initiation complex.

Functionally, with S4 and S5 plays an important role in translational accuracy. Its function is as follows. Interacts with and stabilizes bases of the 16S rRNA that are involved in tRNA selection in the A site and with the mRNA backbone. Located at the interface of the 30S and 50S subunits, it traverses the body of the 30S subunit contacting proteins on the other side and probably holding the rRNA structure together. The combined cluster of proteins S8, S12 and S17 appears to hold together the shoulder and platform of the 30S subunit. This chain is Small ribosomal subunit protein uS12, found in Helicobacter pylori (strain HPAG1).